Consider the following 300-residue polypeptide: Ribosomal RNA small subunit methyltransferase H (300 aa).

S-adenosyl-L-methionine is bound by residues 38-40, Glu55, Ile85, Asp102, and His109; that span reads GGH.

It belongs to the methyltransferase superfamily. RsmH family.

The protein resides in the cytoplasm. The catalysed reaction is cytidine(1402) in 16S rRNA + S-adenosyl-L-methionine = N(4)-methylcytidine(1402) in 16S rRNA + S-adenosyl-L-homocysteine + H(+). Functionally, specifically methylates the N4 position of cytidine in position 1402 (C1402) of 16S rRNA. This chain is Ribosomal RNA small subunit methyltransferase H, found in Brachyspira hyodysenteriae (strain ATCC 49526 / WA1).